Here is a 207-residue protein sequence, read N- to C-terminus: Ras-related protein rab7 (207 aa).

GTP contacts are provided by residues G15–T22, S34–T40, D63–Q67, N125–D128, and A156–K157. Residues Y37–F45 carry the Effector region motif. 2 S-geranylgeranyl cysteine lipidation sites follow: C205 and C207. C207 bears the Cysteine methyl ester mark.

Belongs to the small GTPase superfamily. Rab family. As to quaternary structure, (Microbial infection) Interacts with Singapore grouper iridoviral proteins VP69 (ORF69) and VP101 (ORF101). In terms of tissue distribution, ubiquitously expressed. Expressed in liver, spleen, kidney, brain, intestine, heart, skin, muscle, gill and stomach.

It is found in the late endosome membrane. Its subcellular location is the lysosome membrane. Key regulator in endo-lysosomal trafficking. Governs early-to-late endosomal maturation, microtubule minus-end as well as plus-end directed endosomal migration and positioning, and endosome-lysosome transport through different protein-protein interaction cascades. Plays important roles in microbial pathogen infection and survival, as well as in participating in the life cycle of viruses. The sequence is that of Ras-related protein rab7 from Epinephelus coioides (Orange-spotted grouper).